The primary structure comprises 128 residues: Cyclin-dependent protein kinase inhibitor SMR1 (128 aa).

The tract at residues 17-74 (PIKIRSKTSKTKKDEGDDDEDDLRCSTPTSQEHKIPAVVDSPPPPPRKPRPPPSAPSA) is disordered. Positions 57–71 (SPPPPPRKPRPPPSA) are enriched in pro residues.

Interacts with CDKB1-1. Interacts with CPR5. Expressed in roots, leaves, stems, siliques and flowers. Expressed in the root elongation zone.

It is found in the nucleus. In terms of biological role, probable cyclin-dependent protein kinase (CDK) inhibitor that functions as a repressor of mitosis in the endoreduplication cell cycle. Cooperates with SIM and SMR2 to promote endoreplication during leaf development. Specifically regulates endoreduplication in epidermal pavement cells to produce the cell size pattern. Is necessary for giant cell formation. Positive regulator of effector-triggered immunity (ETI). The sequence is that of Cyclin-dependent protein kinase inhibitor SMR1 from Arabidopsis thaliana (Mouse-ear cress).